The primary structure comprises 415 residues: T-cell-specific guanine nucleotide triphosphate-binding protein 1 (415 aa).

The IRG-type G domain occupies Ala-55–Asp-237. GDP contacts are provided by Gly-66, Gly-68, Lys-69, and Ser-70. A (Microbial infection) Phosphothreonine; by ROP17 modification is found at Thr-89. GDP-binding residues include Gly-90, Lys-171, Asp-173, and Asn-219.

The protein belongs to the TRAFAC class dynamin-like GTPase superfamily. IRG family. In terms of assembly, monomer, homodimer or homotetramer in the presence of GTP. Forms higher order homooligomers in GTP-dependent manner. (Microbial infection) Interacts with Toxoplasma gondii ROP18. Post-translationally, (Microbial infection) Phosphorylated by Toxoplasma gondii ROP17; the phosphorylation leads to disassembly of IRGB6 (TGTP1/TGTP2) polymers into monomers and dimers. Phosphorylated by Toxoplasma gondii ROP18. As to expression, expressed in thymus and lymph nodes, predominantly T-cells. Not expressed by immature CD4(+) CD8(+) thymocytes (at protein level). Expressed in IFNG-stimulated macrophages. Expressed at low levels in unstimulated astrocytes. Due to sequence similarity with Tgtp2, it is impossible to assign unambiguously experimental data published in the literature to Tgtp1 or Tgtp2 gene.

It localises to the cytoplasm. It is found in the endoplasmic reticulum. The protein localises to the golgi apparatus. Its subcellular location is the parasitophorous vacuole membrane. The catalysed reaction is GTP + H2O = GDP + phosphate + H(+). Its function is as follows. Involved in innate cell-autonomous resistance to intracellular pathogens, such as Toxoplasma gondii. During avirulent type II T.gondii infection, recruited to the parasitophorous vacuole (PV) membrane, leading to PV vesiculation and rupture, and subsequent digestion of the parasite within the cytosol. Not recruited to virulent type I T.gondii PV membrane. May confer an antiviral state for vesicular stomatitis virus. The protein is T-cell-specific guanine nucleotide triphosphate-binding protein 1 (Tgtp1) of Mus musculus (Mouse).